Consider the following 640-residue polypeptide: DNA topoisomerase 3 (640 aa).

Residues 21–175 (RVLCVAEKNS…WRAQFSHLEP (155 aa)) enclose the Toprim domain. Mg(2+)-binding residues include Glu27, Asp137, and Asp139. The 430-residue stretch at 189-618 (DMKLVAAVEC…QLLPLYKEAF (430 aa)) folds into the Topo IA-type catalytic domain. Tyr354 serves as the catalytic O-(5'-phospho-DNA)-tyrosine intermediate.

Belongs to the type IA topoisomerase family. It depends on Mg(2+) as a cofactor.

The catalysed reaction is ATP-independent breakage of single-stranded DNA, followed by passage and rejoining.. Introduces a single-strand break via transesterification at a target site in duplex DNA. Releases the supercoiling and torsional tension of DNA introduced during the DNA replication and transcription by transiently cleaving and rejoining one strand of the DNA duplex. The scissile phosphodiester is attacked by the catalytic tyrosine of the enzyme, resulting in the formation of a DNA-(5'-phosphotyrosyl)-enzyme intermediate and the expulsion of a 3'-OH DNA strand. The chain is DNA topoisomerase 3 (TOP3) from Candidozyma auris (Yeast).